Reading from the N-terminus, the 707-residue chain is Methionine--tRNA ligase (707 aa).

Residues proline 13 to histidine 23 carry the 'HIGH' region motif. 4 residues coordinate Zn(2+): cysteine 147, cysteine 150, cysteine 160, and cysteine 163. Residues lysine 344–serine 348 carry the 'KMSKS' region motif. Lysine 347 contributes to the ATP binding site. The 107-residue stretch at aspartate 601–histidine 707 folds into the tRNA-binding domain.

It belongs to the class-I aminoacyl-tRNA synthetase family. MetG type 1 subfamily. As to quaternary structure, homodimer. Zn(2+) is required as a cofactor.

It is found in the cytoplasm. It catalyses the reaction tRNA(Met) + L-methionine + ATP = L-methionyl-tRNA(Met) + AMP + diphosphate. Its function is as follows. Is required not only for elongation of protein synthesis but also for the initiation of all mRNA translation through initiator tRNA(fMet) aminoacylation. This is Methionine--tRNA ligase from Polaromonas naphthalenivorans (strain CJ2).